A 121-amino-acid chain; its full sequence is Large ribosomal subunit protein bL12 (121 aa).

It belongs to the bacterial ribosomal protein bL12 family. As to quaternary structure, homodimer. Part of the ribosomal stalk of the 50S ribosomal subunit. Forms a multimeric L10(L12)X complex, where L10 forms an elongated spine to which 2 to 4 L12 dimers bind in a sequential fashion. Binds GTP-bound translation factors.

Forms part of the ribosomal stalk which helps the ribosome interact with GTP-bound translation factors. Is thus essential for accurate translation. This chain is Large ribosomal subunit protein bL12, found in Xanthomonas campestris pv. campestris (strain B100).